A 305-amino-acid chain; its full sequence is Putative lipid kinase SaurJH9_0749 (305 aa).

Residues 3–139 (NKYTHGVLFY…YDVIKINNQY (137 aa)) enclose the DAGKc domain. ATP contacts are provided by residues S44, 74–80 (GDGTVNE), and T101. Positions 220, 223, and 225 each coordinate Mg(2+). Catalysis depends on E281, which acts as the Proton acceptor.

It belongs to the diacylglycerol/lipid kinase family. Mg(2+) serves as cofactor.

In terms of biological role, may catalyze the ATP-dependent phosphorylation of lipids other than diacylglycerol (DAG). This Staphylococcus aureus (strain JH9) protein is Putative lipid kinase SaurJH9_0749.